A 472-amino-acid chain; its full sequence is Glutamate--tRNA ligase (472 aa).

The 'HIGH' region motif lies at 9-19 (PSPTGYLHVGG). Positions 98, 100, 125, and 127 each coordinate Zn(2+). The 'KMSKS' region signature appears at 237 to 241 (KLSKR). Lys240 is a binding site for ATP.

Belongs to the class-I aminoacyl-tRNA synthetase family. Glutamate--tRNA ligase type 1 subfamily. Monomer. Zn(2+) is required as a cofactor.

The protein localises to the cytoplasm. It carries out the reaction tRNA(Glu) + L-glutamate + ATP = L-glutamyl-tRNA(Glu) + AMP + diphosphate. Catalyzes the attachment of glutamate to tRNA(Glu) in a two-step reaction: glutamate is first activated by ATP to form Glu-AMP and then transferred to the acceptor end of tRNA(Glu). The protein is Glutamate--tRNA ligase of Klebsiella pneumoniae (strain 342).